Here is a 124-residue protein sequence, read N- to C-terminus: MARGSVILLGWLLLVVTLSATLGLGMPAKEKRGWTLNSAGYLLGPHAIDNHRSFSDKHGLTGKRELQLEVEERRPGSVDVPLPESNIVRTIMEFLSFLHLKEAGALDSLPGIPLATSSEDLEKS.

The N-terminal stretch at 1–19 (MARGSVILLGWLLLVVTLS) is a signal peptide. A propeptide spanning residues 20–30 (ATLGLGMPAKE) is cleaved from the precursor. Threonine 61 is subject to Threonine amide. 2 positions are modified to phosphoserine: serine 117 and serine 118.

This sequence belongs to the galanin family. As to expression, expressed in retinal progenitor cells and retinal ganglion cells (at protein level).

Its subcellular location is the secreted. In terms of biological role, endocrine hormone of the central and peripheral nervous systems that binds and activates the G protein-coupled receptors GALR1, GALR2, and GALR3. This small neuropeptide may regulate diverse physiologic functions including contraction of smooth muscle of the gastrointestinal and genitourinary tract, growth hormone and insulin release and adrenal secretion. This Mus musculus (Mouse) protein is Galanin peptides (Gal).